A 283-amino-acid polypeptide reads, in one-letter code: MPAQLIDGNALAKQIRSEAALRAARLTERGHRPGLAVILVGEDPASQVYVRNKVKACQDNGFHSSLDRYPADLSEAELLARIEALNQDPNIHGILVQLPLPKHIDSHKVLEAIAPEKDVDGFHVANAGALMTGAPLFRPCTPYGCMKMLESVQFPLRGARAVVVGASNIVGKPMAMLLLQAGATVTICNSKTRDIGAHTRDADVVVAAVGKRNLITADMVKPGAVVIDVGMNRDDNGKLCGDVDFAGVREVAGYITPVPGGVGPMTITMLLVNTLEAAERAAG.

NADP(+)-binding positions include 165–167 (GAS) and Ser190.

The protein belongs to the tetrahydrofolate dehydrogenase/cyclohydrolase family. As to quaternary structure, homodimer.

It catalyses the reaction (6R)-5,10-methylene-5,6,7,8-tetrahydrofolate + NADP(+) = (6R)-5,10-methenyltetrahydrofolate + NADPH. The enzyme catalyses (6R)-5,10-methenyltetrahydrofolate + H2O = (6R)-10-formyltetrahydrofolate + H(+). The protein operates within one-carbon metabolism; tetrahydrofolate interconversion. Catalyzes the oxidation of 5,10-methylenetetrahydrofolate to 5,10-methenyltetrahydrofolate and then the hydrolysis of 5,10-methenyltetrahydrofolate to 10-formyltetrahydrofolate. In Cupriavidus necator (strain ATCC 17699 / DSM 428 / KCTC 22496 / NCIMB 10442 / H16 / Stanier 337) (Ralstonia eutropha), this protein is Bifunctional protein FolD.